Here is a 161-residue protein sequence, read N- to C-terminus: MKFFAVLALCIVGAIASPLTADEASLVQSSWKAVSHNEVEILAAVFAAYPDIQNKFSQFAGKDLASIKDTGAFATHATRIVSFLSEVIALSGNTSNAAAVNSLVSKLGDDHKARGVSAAQFGEFRTALVAYLQANVSWGDNVAAAWNKALDNTFAIVVPRL.

A signal peptide spans Met-1–Ala-16. Residues Pro-18 to Leu-161 enclose the Globin domain. The heme b site is built by His-76 and His-111.

This sequence belongs to the globin family. As to quaternary structure, homodimer.

This is Globin CTT-VIIB-5/CTT-VIIB-9 (CTT-7B5) from Chironomus thummi thummi (Midge).